The chain runs to 238 residues: Purine nucleoside phosphorylase DeoD-type (238 aa).

Residue histidine 5 participates in a purine D-ribonucleoside binding. Residues glycine 21, arginine 25, arginine 44, and 88–91 (RVGS) each bind phosphate. Residues 180–182 (EME) and 204–205 (SD) each bind a purine D-ribonucleoside. The active-site Proton donor is aspartate 205.

This sequence belongs to the PNP/UDP phosphorylase family. In terms of assembly, homohexamer; trimer of homodimers.

It catalyses the reaction a purine D-ribonucleoside + phosphate = a purine nucleobase + alpha-D-ribose 1-phosphate. The enzyme catalyses a purine 2'-deoxy-D-ribonucleoside + phosphate = a purine nucleobase + 2-deoxy-alpha-D-ribose 1-phosphate. In terms of biological role, catalyzes the reversible phosphorolytic breakdown of the N-glycosidic bond in the beta-(deoxy)ribonucleoside molecules, with the formation of the corresponding free purine bases and pentose-1-phosphate. The polypeptide is Purine nucleoside phosphorylase DeoD-type (Proteus mirabilis (strain HI4320)).